A 240-amino-acid polypeptide reads, in one-letter code: MEHPILFISIILEKLGLPVPHGPVGQTFLEKMCEPYMTYTWLVMAFLFLVSKFTLGNLEIIPGKGQNFWEMIIGGMDDFFADNMGREMADKFFPMIATFALYIAVANLIGLIPGFMSPTASINTTLALTLIVWATHHVIGFKEHGLGYYKHFIGPMKWLVPLMLPIELISNFARLLSLSIRLFGNIMAKEVLLGILFGLAGMFFAPLPIMVLGVLVSLVQAMVFVLLTVVYFAQAQEHAH.

Transmembrane regions (helical) follow at residues 41-61 (WLVM…LEII), 92-112 (FFPM…IGLI), 121-141 (SINT…VIGF), 152-172 (FIGP…ISNF), 191-211 (VLLG…PIMV), and 212-232 (LGVL…VVYF).

The protein belongs to the ATPase A chain family. In terms of assembly, F-type ATPases have 2 components, CF(1) - the catalytic core - and CF(0) - the membrane proton channel. CF(1) has five subunits: alpha(3), beta(3), gamma(1), delta(1), epsilon(1). CF(0) has three main subunits: a(1), b(2) and c(9-12). The alpha and beta chains form an alternating ring which encloses part of the gamma chain. CF(1) is attached to CF(0) by a central stalk formed by the gamma and epsilon chains, while a peripheral stalk is formed by the delta and b chains.

It is found in the cell inner membrane. Key component of the proton channel; it plays a direct role in the translocation of protons across the membrane. The polypeptide is ATP synthase subunit a (Desulfotalea psychrophila (strain LSv54 / DSM 12343)).